The chain runs to 225 residues: Octanoyltransferase (225 aa).

A BPL/LPL catalytic domain is found at 31–214; the sequence is ENTCDEVWLV…ELTTLLDYTD (184 aa). Substrate-binding positions include 70-77, 137-139, and 150-152; these read RGGQVTYH, SLG, and GLA. Cys168 serves as the catalytic Acyl-thioester intermediate.

It belongs to the LipB family.

The protein resides in the cytoplasm. It catalyses the reaction octanoyl-[ACP] + L-lysyl-[protein] = N(6)-octanoyl-L-lysyl-[protein] + holo-[ACP] + H(+). It functions in the pathway protein modification; protein lipoylation via endogenous pathway; protein N(6)-(lipoyl)lysine from octanoyl-[acyl-carrier-protein]: step 1/2. Catalyzes the transfer of endogenously produced octanoic acid from octanoyl-acyl-carrier-protein onto the lipoyl domains of lipoate-dependent enzymes. Lipoyl-ACP can also act as a substrate although octanoyl-ACP is likely to be the physiological substrate. The polypeptide is Octanoyltransferase (Aliivibrio fischeri (strain ATCC 700601 / ES114) (Vibrio fischeri)).